The sequence spans 294 residues: Phosphatidylinositol transfer protein SFH5 (294 aa).

The CRAL-TRIO domain maps to 100 to 266 (HNTELQNVGI…GYGGKDKKNN (167 aa)). Residues Tyr-128, Arg-148, His-173, Tyr-175, and Lys-209 each contribute to the heme site.

This sequence belongs to the SFH5 family. The cofactor is heme b.

The protein localises to the cytoplasm. It localises to the endoplasmic reticulum membrane. Its subcellular location is the microsome membrane. It carries out the reaction a 1,2-diacyl-sn-glycero-3-phospho-(1D-myo-inositol)(in) = a 1,2-diacyl-sn-glycero-3-phospho-(1D-myo-inositol)(out). Functionally, non-classical phosphatidylinositol (PtdIns) transfer protein (PITP), which exhibits PtdIns-binding/transfer activity in the absence of detectable PtdCho-binding/transfer activity. Regulates PtdIns(4,5)P2 homeostasis at the plasma membrane. Heme-binding protein that may play a role in organic oxidant-induced stress responses. This is Phosphatidylinositol transfer protein SFH5 (SFH5) from Saccharomyces cerevisiae (strain YJM789) (Baker's yeast).